Here is a 123-residue protein sequence, read N- to C-terminus: Small ribosomal subunit protein uS13 (123 aa).

The interval 99 to 123 (RGQRTRTNARTRKGPRRTVGVKRKK) is disordered.

Belongs to the universal ribosomal protein uS13 family. Part of the 30S ribosomal subunit. Forms a loose heterodimer with protein S19. Forms two bridges to the 50S subunit in the 70S ribosome.

Located at the top of the head of the 30S subunit, it contacts several helices of the 16S rRNA. In the 70S ribosome it contacts the 23S rRNA (bridge B1a) and protein L5 of the 50S subunit (bridge B1b), connecting the 2 subunits; these bridges are implicated in subunit movement. Contacts the tRNAs in the A and P-sites. This chain is Small ribosomal subunit protein uS13, found in Carboxydothermus hydrogenoformans (strain ATCC BAA-161 / DSM 6008 / Z-2901).